Consider the following 410-residue polypeptide: Caspase-1 (410 aa).

One can recognise a CARD domain in the interval 1 to 91 (MADKVLKGKR…HLAETLGLSS (91 aa)). A propeptide spanning residues 1 to 119 (MADKVLKGKR…PLPASVNNMP (119 aa)) is cleaved from the precursor. Polar residues predominate over residues 88 to 104 (GLSSSPQSGNSQNTTDS). A disordered region spans residues 88–125 (GLSSSPQSGNSQNTTDSEVAFPPLPASVNNMPGPAEPE). Catalysis depends on residues H235 and C284. The propeptide occupies 297-322 (SPAAPMDSTSQMGSSLSQVGDNLEDD).

Belongs to the peptidase C14A family. Heterotetramer that consists of two anti-parallel arranged heterodimers, each one formed by a 20 kDa (Caspase-1 subunit p20) and a 10 kDa (Caspase-1 subunit p10) subunit. May be a component of the inflammasome, a protein complex which also includes PYCARD, CARD8 and NLRP2 and whose function would be the activation of pro-inflammatory caspases. Component of the AIM2 PANoptosome complex, a multiprotein complex that drives inflammatory cell death (PANoptosis). Both the p10 and p20 subunits interact with MEFV. Interacts with CARD17P/INCA and CARD18. Interacts with SERPINB1; this interaction regulates CASP1 activity. In terms of assembly, heterotetramer that consists of two anti-parallel arranged heterodimers, each one formed by a 20 kDa (Caspase-1 subunit p20) and a 10 kDa (Caspase-1 subunit p10) subunit. In terms of processing, the two subunits are derived from the precursor sequence by an autocatalytic mechanism. Post-translationally, ubiquitinated via 'Lys-11'-linked polyubiquitination. Deubiquitinated by USP8.

Its subcellular location is the cytoplasm. It localises to the cell membrane. It catalyses the reaction Strict requirement for an Asp residue at position P1 and has a preferred cleavage sequence of Tyr-Val-Ala-Asp-|-.. In terms of biological role, thiol protease involved in a variety of inflammatory processes by proteolytically cleaving other proteins, such as the precursors of the inflammatory cytokines interleukin-1 beta (IL1B) and interleukin 18 (IL18) as well as the pyroptosis inducer Gasdermin-D (GSDMD), into active mature peptides. Plays a key role in cell immunity as an inflammatory response initiator: once activated through formation of an inflammasome complex, it initiates a pro-inflammatory response through the cleavage of the two inflammatory cytokines IL1B and IL18, releasing the mature cytokines which are involved in a variety of inflammatory processes. Cleaves a tetrapeptide after an Asp residue at position P1. Also initiates pyroptosis, a programmed lytic cell death pathway, through cleavage of GSDMD. In contrast to cleavage of interleukin IL1B, recognition and cleavage of GSDMD is not strictly dependent on the consensus cleavage site but depends on an exosite interface on CASP1 that recognizes and binds the Gasdermin-D, C-terminal (GSDMD-CT) part. Cleaves and activates CASP7 in response to bacterial infection, promoting plasma membrane repair. Upon inflammasome activation, during DNA virus infection but not RNA virus challenge, controls antiviral immunity through the cleavage of CGAS, rendering it inactive. In apoptotic cells, cleaves SPHK2 which is released from cells and remains enzymatically active extracellularly. In Felis catus (Cat), this protein is Caspase-1 (CASP1).